The sequence spans 724 residues: Ribosomal RNA large subunit methyltransferase K/L (724 aa).

The region spanning 42–153 is the THUMP domain; that stretch reads DAQRLVLWSR…KGRATLSVDL (112 aa).

The protein belongs to the methyltransferase superfamily. RlmKL family.

It is found in the cytoplasm. The catalysed reaction is guanosine(2445) in 23S rRNA + S-adenosyl-L-methionine = N(2)-methylguanosine(2445) in 23S rRNA + S-adenosyl-L-homocysteine + H(+). It catalyses the reaction guanosine(2069) in 23S rRNA + S-adenosyl-L-methionine = N(2)-methylguanosine(2069) in 23S rRNA + S-adenosyl-L-homocysteine + H(+). Specifically methylates the guanine in position 2445 (m2G2445) and the guanine in position 2069 (m7G2069) of 23S rRNA. In Xylella fastidiosa (strain M23), this protein is Ribosomal RNA large subunit methyltransferase K/L.